Consider the following 341-residue polypeptide: ATPase GET3 (341 aa).

34–41 (KGGVGKTT) contacts ATP. Asp-63 is an active-site residue. Glu-245 and Asn-272 together coordinate ATP. Cys-283 and Cys-286 together coordinate Zn(2+).

Belongs to the arsA ATPase family. In terms of assembly, homodimer.

The protein resides in the cytoplasm. It is found in the endoplasmic reticulum. ATPase required for the post-translational delivery of tail-anchored (TA) proteins to the endoplasmic reticulum. Recognizes and selectively binds the transmembrane domain of TA proteins in the cytosol. This complex then targets to the endoplasmic reticulum by membrane-bound receptors, where the tail-anchored protein is released for insertion. This process is regulated by ATP binding and hydrolysis. ATP binding drives the homodimer towards the closed dimer state, facilitating recognition of newly synthesized TA membrane proteins. ATP hydrolysis is required for insertion. Subsequently, the homodimer reverts towards the open dimer state, lowering its affinity for the membrane-bound receptor, and returning it to the cytosol to initiate a new round of targeting. The polypeptide is ATPase GET3 (Paracoccidioides lutzii (strain ATCC MYA-826 / Pb01) (Paracoccidioides brasiliensis)).